The following is a 360-amino-acid chain: Uroporphyrinogen decarboxylase (360 aa).

Substrate is bound by residues 31 to 35, D81, Y157, T212, and H333; that span reads RQAGR.

Belongs to the uroporphyrinogen decarboxylase family. As to quaternary structure, homodimer.

The protein localises to the cytoplasm. The catalysed reaction is uroporphyrinogen III + 4 H(+) = coproporphyrinogen III + 4 CO2. The protein operates within porphyrin-containing compound metabolism; protoporphyrin-IX biosynthesis; coproporphyrinogen-III from 5-aminolevulinate: step 4/4. Its function is as follows. Catalyzes the decarboxylation of four acetate groups of uroporphyrinogen-III to yield coproporphyrinogen-III. The protein is Uroporphyrinogen decarboxylase of Herminiimonas arsenicoxydans.